Consider the following 879-residue polypeptide: Prostaglandin F2 receptor negative regulator (879 aa).

The N-terminal stretch at 1–21 (MGRPAPRPLLLALLSLAVCRG) is a signal peptide. Ig-like C2-type domains are found at residues 22-129 (RVVR…ATVQ) and 149-268 (PSSR…KAVE). Residues 22–832 (RVVRVPAGTL…MDVLNAFKYP (811 aa)) are Extracellular-facing. 2 disulfide bridges follow: Cys43-Cys119 and Cys169-Cys247. N-linked (GlcNAc...) asparagine glycosylation occurs at Asn44. The Cell attachment site signature appears at 89-91 (RGD). Thr271 carries the post-translational modification Phosphothreonine. 4 Ig-like C2-type domains span residues 276–389 (PTAL…WHKV), 406–527 (PEYQ…RNSS), 544–662 (ASED…AWSP), and 688–813 (PIFN…AEIH). A disulfide bond links Cys299 and Cys373. 3 N-linked (GlcNAc...) asparagine glycosylation sites follow: Asn300, Asn383, and Asn413. Positions 424–427 (PTEL) match the Endoplasmic reticulum retention signal motif. Cys429 and Cys515 are disulfide-bonded. N-linked (GlcNAc...) asparagine glycans are attached at residues Asn525, Asn600, Asn618, and Asn691. Cys571 and Cys655 are disulfide-bonded. The short motif at 703–705 (RGD) is the Cell attachment site element. The cysteines at positions 711 and 793 are disulfide-linked. A helical transmembrane segment spans residues 833 to 853 (LLIGVGLSTVIGLLSCLIGYC). The Cytoplasmic portion of the chain corresponds to 854–879 (SSHWCCKKEVRETRRERRRLMSMEMD).

In terms of assembly, interacts with CD9 and CD81. Part of a complex composed of CD9, CD81 and IGSF8. Also seems to interact with CD63, CD82 and CD151. As to expression, reproductive tissues, lung and heart.

It is found in the endoplasmic reticulum membrane. The protein localises to the golgi apparatus. The protein resides in the trans-Golgi network membrane. Inhibits the binding of prostaglandin F2-alpha (PGF2-alpha) to its specific FP receptor, by decreasing the receptor number rather than the affinity constant. Functional coupling with the prostaglandin F2-alpha receptor seems to occur. In myoblasts, associates with tetraspanins CD9 and CD81 to prevent myotube fusion during muscle regeneration. In Rattus norvegicus (Rat), this protein is Prostaglandin F2 receptor negative regulator (Ptgfrn).